Consider the following 205-residue polypeptide: Small ribosomal subunit protein uS4 (205 aa).

Residues 19-45 (IWGRSKSPVNRREYGPGQHGQRRKGKL) are disordered. In terms of domain architecture, S4 RNA-binding spans 94-157 (RRLDAVVYRA…KQMALVLEAV (64 aa)).

The protein belongs to the universal ribosomal protein uS4 family. As to quaternary structure, part of the 30S ribosomal subunit. Contacts protein S5. The interaction surface between S4 and S5 is involved in control of translational fidelity.

One of the primary rRNA binding proteins, it binds directly to 16S rRNA where it nucleates assembly of the body of the 30S subunit. Functionally, with S5 and S12 plays an important role in translational accuracy. This chain is Small ribosomal subunit protein uS4, found in Azorhizobium caulinodans (strain ATCC 43989 / DSM 5975 / JCM 20966 / LMG 6465 / NBRC 14845 / NCIMB 13405 / ORS 571).